We begin with the raw amino-acid sequence, 396 residues long: Tyrosine--tRNA ligase (396 aa).

The short motif at 43–52 (PSSPDIHLGH) is the 'HIGH' region element. The short motif at 227-231 (KMSKS) is the 'KMSKS' region element. Position 230 (Lys230) interacts with ATP. Residues 338-396 (TGVIDFIILSGLAKSKSEARRLLEQGAVEINSEKISDQNTPVKCGDIIKAGKRRYSKAI) form the S4 RNA-binding domain.

This sequence belongs to the class-I aminoacyl-tRNA synthetase family. TyrS type 2 subfamily. As to quaternary structure, homodimer.

The protein resides in the cytoplasm. It carries out the reaction tRNA(Tyr) + L-tyrosine + ATP = L-tyrosyl-tRNA(Tyr) + AMP + diphosphate + H(+). In terms of biological role, catalyzes the attachment of tyrosine to tRNA(Tyr) in a two-step reaction: tyrosine is first activated by ATP to form Tyr-AMP and then transferred to the acceptor end of tRNA(Tyr). This Dehalococcoides mccartyi (strain CBDB1) protein is Tyrosine--tRNA ligase.